We begin with the raw amino-acid sequence, 185 residues long: Ribosome-recycling factor (185 aa).

Belongs to the RRF family.

The protein resides in the cytoplasm. Functionally, responsible for the release of ribosomes from messenger RNA at the termination of protein biosynthesis. May increase the efficiency of translation by recycling ribosomes from one round of translation to another. In Dehalococcoides mccartyi (strain ATCC BAA-2266 / KCTC 15142 / 195) (Dehalococcoides ethenogenes (strain 195)), this protein is Ribosome-recycling factor.